The following is a 290-amino-acid chain: Transmembrane protein 33 homolog (290 aa).

2 disordered regions span residues 1–22 (MSSP…EFTG) and 39–72 (IDPN…SPRA). Residues 45–72 (SSNNTTTQRPSTSSSSRTSSSSTSSPRA) show a composition bias toward low complexity. 4 consecutive transmembrane segments (helical) span residues 83 to 103 (LYGA…FYFI), 109 to 129 (FFYK…FNTF), 150 to 170 (FVFY…YLLP), and 218 to 238 (IVLI…LVFI).

This sequence belongs to the PER33/POM33 family.

It localises to the membrane. The chain is Transmembrane protein 33 homolog (tmem33) from Dictyostelium discoideum (Social amoeba).